The sequence spans 196 residues: Putative 3-methyladenine DNA glycosylase (196 aa).

It belongs to the DNA glycosylase MPG family.

The polypeptide is Putative 3-methyladenine DNA glycosylase (Bacillus licheniformis (strain ATCC 14580 / DSM 13 / JCM 2505 / CCUG 7422 / NBRC 12200 / NCIMB 9375 / NCTC 10341 / NRRL NRS-1264 / Gibson 46)).